Consider the following 199-residue polypeptide: Transgelin-3 (199 aa).

Positions 24-136 constitute a Calponin-homology (CH) domain; that stretch reads ADLENKLVDW…RTLMALGSVA (113 aa). At serine 163 the chain carries Phosphoserine. The stretch at 174-199 is one Calponin-like repeat; it reads IGLQMGSNKGASQAGMTGYGMPRQIM. Polar residues predominate over residues 178–188; the sequence is MGSNKGASQAG. Positions 178-199 are disordered; sequence MGSNKGASQAGMTGYGMPRQIM.

The protein belongs to the calponin family.

In Mus musculus (Mouse), this protein is Transgelin-3 (Tagln3).